Here is a 387-residue protein sequence, read N- to C-terminus: 3-ketoacyl-CoA thiolase (387 aa).

The active-site Acyl-thioester intermediate is Cys-91. Active-site proton acceptor residues include His-343 and Cys-373.

The protein belongs to the thiolase-like superfamily. Thiolase family. As to quaternary structure, heterotetramer of two alpha chains (FadB) and two beta chains (FadA).

The protein resides in the cytoplasm. The enzyme catalyses an acyl-CoA + acetyl-CoA = a 3-oxoacyl-CoA + CoA. It participates in lipid metabolism; fatty acid beta-oxidation. In terms of biological role, catalyzes the final step of fatty acid oxidation in which acetyl-CoA is released and the CoA ester of a fatty acid two carbons shorter is formed. This chain is 3-ketoacyl-CoA thiolase, found in Shewanella loihica (strain ATCC BAA-1088 / PV-4).